The sequence spans 404 residues: MSNQSLSSKILGGNLVLRIAVGLVLGICLALVSPDAAKSVGVLGQFFVKSLRAIAPILVFVLVMASIANKEVGSDSRLKPILVMYVLGTFVAAVTAVILSYLFPTTLELVTSPEGLAPPQGVGEVLKTVVFNLVDNPLGAITNGNFIGILAWSIGLGIALRHAAPSTKVMLNDISDAVSFVVKVVIAFAPIGVFGLVAETMATNGADAFIGYARLLAVLLGAMAIVAFILNPLLVYWKIRRNPYPLTITCLRESGVTAFFTRSSAANIPVNMGLAKRLGIKEEIYSIAIPLGANINMAGAAITITVLTLAAAYTQGIVPDFSTAVLLSIVASICACGASGVAGGSLLLIPLACSLFNIPNDVAAQVIGVGFIIGVIQDSAETALNSSTDVLFTAAVSMSDEKNN.

8 helical membrane-spanning segments follow: residues 10–30, 53–73, 81–101, 140–160, 177–197, 215–235, 287–307, and 329–349; these read ILGG…ICLA, AIAP…KEVG, ILVM…ILSY, AITN…GIAL, AVSF…FGLV, LLAV…PLLV, IAIP…ITVL, and IVAS…LLLI.

It belongs to the dicarboxylate/amino acid:cation symporter (DAACS) (TC 2.A.23) family.

The protein resides in the cell inner membrane. It carries out the reaction L-serine(in) + Na(+)(in) = L-serine(out) + Na(+)(out). The catalysed reaction is L-threonine(in) + Na(+)(in) = L-threonine(out) + Na(+)(out). Functionally, involved in the import of serine and threonine into the cell, with the concomitant import of sodium (symport system). This Glaesserella parasuis serovar 5 (strain SH0165) (Haemophilus parasuis) protein is Serine/threonine transporter SstT.